The primary structure comprises 143 residues: Large ribosomal subunit protein uL11 (143 aa).

It belongs to the universal ribosomal protein uL11 family. Part of the ribosomal stalk of the 50S ribosomal subunit. Interacts with L10 and the large rRNA to form the base of the stalk. L10 forms an elongated spine to which L12 dimers bind in a sequential fashion forming a multimeric L10(L12)X complex. Post-translationally, one or more lysine residues are methylated.

In terms of biological role, forms part of the ribosomal stalk which helps the ribosome interact with GTP-bound translation factors. The protein is Large ribosomal subunit protein uL11 of Pseudomonas fluorescens (strain SBW25).